The chain runs to 123 residues: Large ribosomal subunit protein bL12 (123 aa).

Belongs to the bacterial ribosomal protein bL12 family. In terms of assembly, homodimer. Part of the ribosomal stalk of the 50S ribosomal subunit. Forms a multimeric L10(L12)X complex, where L10 forms an elongated spine to which 2 to 4 L12 dimers bind in a sequential fashion. Binds GTP-bound translation factors.

Functionally, forms part of the ribosomal stalk which helps the ribosome interact with GTP-bound translation factors. Is thus essential for accurate translation. In Bartonella tribocorum (strain CIP 105476 / IBS 506), this protein is Large ribosomal subunit protein bL12.